Consider the following 306-residue polypeptide: Putative S-adenosyl-L-methionine-dependent methyltransferase MAV_4442 (306 aa).

Residues Asp129 and 158 to 159 (DL) contribute to the S-adenosyl-L-methionine site.

This sequence belongs to the UPF0677 family.

In terms of biological role, exhibits S-adenosyl-L-methionine-dependent methyltransferase activity. The polypeptide is Putative S-adenosyl-L-methionine-dependent methyltransferase MAV_4442 (Mycobacterium avium (strain 104)).